Here is a 337-residue protein sequence, read N- to C-terminus: 1-aminocyclopropane-1-carboxylate deaminase (337 aa).

The residue at position 50 (lysine 50) is an N6-(pyridoxal phosphate)lysine. The active-site Nucleophile is serine 77.

It belongs to the ACC deaminase/D-cysteine desulfhydrase family. Homotrimer. The cofactor is pyridoxal 5'-phosphate.

It catalyses the reaction 1-aminocyclopropane-1-carboxylate + H2O = 2-oxobutanoate + NH4(+). Its function is as follows. Catalyzes a cyclopropane ring-opening reaction, the irreversible conversion of 1-aminocyclopropane-1-carboxylate (ACC) to ammonia and alpha-ketobutyrate. Allows growth on ACC as a nitrogen source. The polypeptide is 1-aminocyclopropane-1-carboxylate deaminase (Methylobacterium sp. (strain 4-46)).